We begin with the raw amino-acid sequence, 336 residues long: HTH-type transcriptional repressor PurR (336 aa).

Positions 2–56 (ATIKDVARLAGVSTTTVSHVINKTRFVAETTQEKVMEAVKQLNYAPSAVARSLKC) constitute an HTH lacI-type domain. The segment at residues 4 to 23 (IKDVARLAGVSTTTVSHVIN) is a DNA-binding region (H-T-H motif). A DNA-binding region spans residues 48–56 (SAVARSLKC). Residues F73, K189, F220, and D274 each contribute to the hypoxanthine site.

As to quaternary structure, homodimer.

It participates in purine metabolism; purine nucleotide biosynthesis [regulation]. Is the main repressor of the genes involved in the de novo synthesis of purine nucleotides, regulating purB, purC, purEK, purF, purHD, purL, purMN and guaBA expression. PurR is allosterically activated to bind its cognate DNA by binding the purine corepressors, hypoxanthine or guanine, thereby effecting transcription repression. This Vibrio cholerae serotype O1 (strain ATCC 39315 / El Tor Inaba N16961) protein is HTH-type transcriptional repressor PurR.